Consider the following 413-residue polypeptide: Cell division protein FtsA (413 aa).

This sequence belongs to the FtsA/MreB family. Self-interacts. Interacts with FtsZ.

The protein resides in the cell inner membrane. Functionally, cell division protein that is involved in the assembly of the Z ring. May serve as a membrane anchor for the Z ring. This Borreliella burgdorferi (strain ATCC 35210 / DSM 4680 / CIP 102532 / B31) (Borrelia burgdorferi) protein is Cell division protein FtsA.